A 1013-amino-acid chain; its full sequence is Probable outer membrane protein PmpG (1013 aa).

An N-terminal signal peptide occupies residues 1 to 27 (MQTSFHKFFLSMILAYSCCSLSGGGYA). Residues 733–1013 (GRSYCRGLWV…GLSAGSKVRF (281 aa)) enclose the Autotransporter domain.

It belongs to the PMP outer membrane protein family.

It is found in the secreted. It localises to the cell wall. Its subcellular location is the cell outer membrane. The polypeptide is Probable outer membrane protein PmpG (pmpG) (Chlamydia trachomatis serovar D (strain ATCC VR-885 / DSM 19411 / UW-3/Cx)).